Consider the following 335-residue polypeptide: Tetraacyldisaccharide 4'-kinase (335 aa).

Position 59–66 (59–66 (TAGGNGKT)) interacts with ATP.

The protein belongs to the LpxK family.

The enzyme catalyses a lipid A disaccharide + ATP = a lipid IVA + ADP + H(+). Its pathway is glycolipid biosynthesis; lipid IV(A) biosynthesis; lipid IV(A) from (3R)-3-hydroxytetradecanoyl-[acyl-carrier-protein] and UDP-N-acetyl-alpha-D-glucosamine: step 6/6. Its function is as follows. Transfers the gamma-phosphate of ATP to the 4'-position of a tetraacyldisaccharide 1-phosphate intermediate (termed DS-1-P) to form tetraacyldisaccharide 1,4'-bis-phosphate (lipid IVA). This is Tetraacyldisaccharide 4'-kinase from Vibrio campbellii (strain ATCC BAA-1116).